The chain runs to 272 residues: 4-hydroxy-tetrahydrodipicolinate reductase (272 aa).

An NAD(+)-binding site is contributed by 10 to 15 (GAAGRM). Residue Arg37 participates in NADP(+) binding. Residues 100 to 102 (GTT) and 124 to 127 (SGNM) contribute to the NAD(+) site. His157 acts as the Proton donor/acceptor in catalysis. His158 contacts (S)-2,3,4,5-tetrahydrodipicolinate. Residue Lys161 is the Proton donor of the active site. Residue 167–168 (GT) participates in (S)-2,3,4,5-tetrahydrodipicolinate binding.

It belongs to the DapB family.

Its subcellular location is the cytoplasm. It carries out the reaction (S)-2,3,4,5-tetrahydrodipicolinate + NAD(+) + H2O = (2S,4S)-4-hydroxy-2,3,4,5-tetrahydrodipicolinate + NADH + H(+). It catalyses the reaction (S)-2,3,4,5-tetrahydrodipicolinate + NADP(+) + H2O = (2S,4S)-4-hydroxy-2,3,4,5-tetrahydrodipicolinate + NADPH + H(+). The protein operates within amino-acid biosynthesis; L-lysine biosynthesis via DAP pathway; (S)-tetrahydrodipicolinate from L-aspartate: step 4/4. In terms of biological role, catalyzes the conversion of 4-hydroxy-tetrahydrodipicolinate (HTPA) to tetrahydrodipicolinate. The polypeptide is 4-hydroxy-tetrahydrodipicolinate reductase (Methylocella silvestris (strain DSM 15510 / CIP 108128 / LMG 27833 / NCIMB 13906 / BL2)).